A 189-amino-acid chain; its full sequence is Phosphoheptose isomerase (189 aa).

Positions 34 to 189 (LVDALGNGKK…CDLLEKRLFG (156 aa)) constitute an SIS domain. Substrate is bound at residue 49-51 (NGG). The Zn(2+) site is built by H58 and E62. Residues E62, 91–92 (ND), 117–119 (STS), S122, and Q169 each bind substrate. 2 residues coordinate Zn(2+): Q169 and H177.

The protein belongs to the SIS family. GmhA subfamily. In terms of assembly, homotetramer. Requires Zn(2+) as cofactor.

The protein resides in the cytoplasm. It carries out the reaction 2 D-sedoheptulose 7-phosphate = D-glycero-alpha-D-manno-heptose 7-phosphate + D-glycero-beta-D-manno-heptose 7-phosphate. Its pathway is carbohydrate biosynthesis; D-glycero-D-manno-heptose 7-phosphate biosynthesis; D-glycero-alpha-D-manno-heptose 7-phosphate and D-glycero-beta-D-manno-heptose 7-phosphate from sedoheptulose 7-phosphate: step 1/1. In terms of biological role, catalyzes the isomerization of sedoheptulose 7-phosphate in D-glycero-D-manno-heptose 7-phosphate. The polypeptide is Phosphoheptose isomerase (Geotalea uraniireducens (strain Rf4) (Geobacter uraniireducens)).